The primary structure comprises 878 residues: MPEEYIMSSKACIYVLGGAANTAALFDFDGVYILDGGFAEKNPGFVAHVRDVSAVLLAAPTLGNLGTTSALLEQGKPLPVFTNTKPFKTAKPGSSGEIAKAIQEANSKILSVAPPLFNPKYPANIIYQSAAKGVLSLYILAGDVKDAEVITKALAGGNEAEVEKAAAEHGTIGVLLWRPAMTDQSVVRVLISGTSSLSRIQQSLDKAAKSLPFLNVPTVKSKDALSDIPAPAVPRPVAGKPSARPATTTGTATRPTRPAVPAASAPRALTSRAPAGPSRPTTTRNAAPAPRTAVPSRATVLTKTAPASKAPTRAPVPARSAPAPPRGAPAKPAANTAKAEPIAQKKTVGKVQGTAPSKPAPAAPASAATSPAPAPEAPRRDPNNVTIVLDDSLSPEDFNQGSAPMDIVVIPPTPEPPRHEVAQATHPEESIIDAEDLAKAPLEVDDVANLADVEDEIPPPVDAFKKPEPHPEPNVSGGSEEDKIPEPVDAFKKPDPVELDDFDPLKPSHPEPSAPVVPSDHIIIATPDPELPDIVAAVPFVSPSPKGPNDGLVKLDDELEKIAPGFEEPLIPQAPRDDGTLAECSEEVSKLVEISMDTDNSAEVAADLAKAVGEVTQLSADLQNLGLDEKTDEYVRKLSNQMIEDATLPFTSALASSIVTSNGSETNGHGEQAHAAQNGGIDHQKEIPKHDLMQSRSSVIENGAAVQYEKTDPALDDVLNACAQESEKIDASHPDNLHMPAAPGSAAPAKPVKFARPYYFDVVTVPRNEKLETSVAADGLQEFISKVRSRNVILASKDISGEQLQAILCGKQTWCDSAHPCNVIPTHSSPMLLDFRQKNEEQFAANNLQFSIPVEKQRTTVSSDAGAIEYELARVDLL.

Disordered stretches follow at residues 224–425 and 456–518; these read ALSD…AQAT and EIPP…PVVP. Low complexity-rich tracts occupy residues 241-268, 278-293, 310-321, and 328-339; these read PSAR…APRA, SRPT…PRTA, APTRAPVPARSA, and APAKPAANTAKA. Composition is skewed to basic and acidic residues over residues 416 to 425 and 480 to 496; these read PPRHEVAQAT and EEDK…KPDP.

The protein belongs to the MAP1A/MAP1B/MAP1S family. As to quaternary structure, interacts with dlg-1.

Its subcellular location is the cell projection. The protein localises to the dendrite. The protein resides in the perikaryon. It localises to the axon. It is found in the cytoplasm. Its subcellular location is the cytoskeleton. This Caenorhabditis elegans protein is Microtubule-associated protein homolog maph-1.1.